The sequence spans 908 residues: MKKRRKVTSNLDEKIHLGYHKDSSEENAAVECGQVTYTQAPERPTPEAAQRCQELPPSPDQRKLLSSLQYNKNLLKYLNDDRQKQPSFCDLLIIVEGKEFSAHKVVVAVGSSYFHACLSKNPSTDVVTLDHVTHSVFQHLLEFLYTSEFFVYKYEIPLVLEAAKFLDIIDAVKLLNNENVAAFQAELTEKSSPEETLNELTGRLSSSHQCKFCSRHFCYKKSLENHLAKTHRSLLLGKKHGLKMLERSFSTRRSKRNRKCPVKFEDTSDDEQESGDGSDNLHQESSEKERSDRNDSEDPGSEYNAEDEELEEEVSDEDSDTEQSDKDNDAEEEPEAGDSAGSIHEGLAPVIIQNSNKKILQCPKCDKTFDRIGKYESHTRVHTGEKPFECDICHQRYSTKSNLTVHRKKHSNEVEFHRKEHKCPYCNKLHASKKTLAKHVKRFHPENAQEFISIKKTKSESWKCDICKKSFTRRPHLEEHMILHSQDKPFKCTYCEEHFKSRFARLKHQEKFHLGPFPCDICGRQFNDTGNLKRHIECTHGGKRKWTCFICGKSVRERTTLKEHLRIHSGEKPHLCSICGQSFRHGSSYRLHLRVHHDDKRYECDECGKTFIRHDHLTKHKKIHSGEKAHQCEECGKCFGRRDHLTVHYKSVHLGEKVWQKYKATFHQCDVCKKIFKGKSSLEMHFRTHSGEKPYKCQICNQSFRIKKTLTKHLVIHSDARPFNCQHCNATFKRKDKLKYHIDHVHGIKSPDDSLSTSEEKLMSLPMEYSSDDKIFQAETKQYLDQPKVYQSEAKTMLQNVSAEVCVPVTLVPVQMPDTSSDLVPHTTTLPTSSHEMLPPQPQSTDYPRAADLAFLEKYTLTPQPANIVHPVRPEQMLDPREPSYLGTLLGLDSTAAVQNMCSSEHRS.

The tract at residues 38–59 is disordered; the sequence is TQAPERPTPEAAQRCQELPPSP. Residues 89-153 enclose the BTB domain; that stretch reads CDLLIIVEGK…LYTSEFFVYK (65 aa). The segment at 208–231 adopts a C2H2-type 1 zinc-finger fold; sequence HQCKFCSRHFCYKKSLENHLAKTH. A compositionally biased stretch (basic residues) spans 252–261; sequence RRSKRNRKCP. Residues 252–344 are disordered; it reads RRSKRNRKCP…EAGDSAGSIH (93 aa). A compositionally biased stretch (acidic residues) spans 267–276; sequence TSDDEQESGD. The span at 279–296 shows a compositional bias: basic and acidic residues; sequence DNLHQESSEKERSDRNDS. Residues 297 to 336 show a composition bias toward acidic residues; it reads EDPGSEYNAEDEELEEEVSDEDSDTEQSDKDNDAEEEPEA. 13 consecutive C2H2-type zinc fingers follow at residues 360–382, 388–410, 421–444, 462–484, 490–513, 517–540, 546–568, 574–596, 602–624, 630–653, 667–689, 695–717, and 723–746; these read LQCPKCDKTFDRIGKYESHTRVH, FECDICHQRYSTKSNLTVHRKKH, HKCPYCNKLHASKKTLAKHVKRFH, WKCDICKKSFTRRPHLEEHMILH, FKCTYCEEHFKSRFARLKHQEKFH, FPCDICGRQFNDTGNLKRHIECTH, WTCFICGKSVRERTTLKEHLRIH, HLCSICGQSFRHGSSYRLHLRVH, YECDECGKTFIRHDHLTKHKKIH, HQCEECGKCFGRRDHLTVHYKSVH, HQCDVCKKIFKGKSSLEMHFRTH, YKCQICNQSFRIKKTLTKHLVIH, and FNCQHCNATFKRKDKLKYHIDHVH.

Its subcellular location is the nucleus. May be involved in transcriptional regulation. The polypeptide is Zinc finger and BTB domain-containing protein 41 (Zbtb41) (Mus musculus (Mouse)).